A 473-amino-acid polypeptide reads, in one-letter code: H(+)/Cl(-) exchange transporter ClcA (473 aa).

Over 1–32 (MKTDTPSLETPQAARLRRRQLIRQLLERDKTP) the chain is Cytoplasmic. A helical transmembrane segment spans residues 33 to 69 (LAILFMAAVVGTLVGLAAVAFDKGVAWLQNQRMGALV). At 70–76 (HTADNYP) the chain is on the periplasmic side. The helical transmembrane segment at 77-100 (LLLTVAFLCSAVLAMFGYFLVRKY) threads the bilayer. The short motif at 106–110 (GSGIP) is the Selectivity filter part_1 element. Residue Ser107 participates in chloride binding. Positions 109–116 (IPEIEGAL) form an intramembrane region, helical. At 117–123 (EDQRPVR) the chain is on the cytoplasmic side. 2 helical membrane passes run 124–141 (WWRVLPVKFFGGLGTLGG) and 148–166 (EGPTVQIGGNIGRMVLDIF). A Selectivity filter part_2 motif is present at residues 146–150 (GREGP). The Cytoplasmic segment spans residues 167 to 176 (RLKGDEARHT). 2 intramembrane regions (helical) span residues 177-189 (LLATGAAAGLAAA) and 193-201 (PLAGILFII). Over 202 to 214 (EEMRPQFRYTLIS) the chain is Cytoplasmic. Residues 215 to 232 (IKAVFIGVIMSTIMYRIF) traverse the membrane as a helical segment. The Periplasmic segment spans residues 233–252 (NHEVALIDVGKLSDAPLNTL). A helical transmembrane segment spans residues 253–281 (WLYLILGIIFGIFGPIFNKWVLGMQDLLH). At 282–287 (RVHGGN) the chain is on the cytoplasmic side. The chain crosses the membrane as a helical span at residues 288-309 (ITKWILMGGAIGGLCGLLGFVA). Residues 310-329 (PATSGGGFNLIPIATAGNFS) lie on the Periplasmic side of the membrane. 2 helical membrane passes run 330 to 349 (MGMLVFIFVARVITTLLCFS) and 355 to 376 (GIFAPMLALGTVLGTAFGMVAV). Positions 355–359 (GIFAP) match the Selectivity filter part_3 motif. Ile356 and Phe357 together coordinate chloride. Topologically, residues 377–386 (ELFPQYHLEA) are periplasmic. Residues 387–401 (GTFAIAGMGALLAAS) constitute an intramembrane region (helical). Residues 402 to 404 (IRA) constitute an intramembrane region (note=Loop between two helices). Residues 405 to 416 (PLTGIILVLEMT) constitute an intramembrane region (helical). The note=Loop between two helices intramembrane region spans 417–421 (DNYQL). The chain crosses the membrane as a helical span at residues 422–438 (ILPMIITGLGATLLAQF). At 439 to 473 (TGGKPLYSAILARTLAKQEAEQLARSKAASASENT) the chain is on the cytoplasmic side. A chloride-binding site is contributed by Tyr445.

This sequence belongs to the chloride channel (TC 2.A.49) family. ClcA subfamily. In terms of assembly, homodimer.

It localises to the cell inner membrane. The catalysed reaction is 2 chloride(in) + H(+)(out) = 2 chloride(out) + H(+)(in). Its function is as follows. Proton-coupled chloride transporter. Functions as antiport system and exchanges two chloride ions for 1 proton. Probably acts as an electrical shunt for an outwardly-directed proton pump that is linked to amino acid decarboxylation, as part of the extreme acid resistance (XAR) response. The chain is H(+)/Cl(-) exchange transporter ClcA from Escherichia coli O9:H4 (strain HS).